A 131-amino-acid polypeptide reads, in one-letter code: ATP synthase epsilon chain, chloroplastic (131 aa).

The protein belongs to the ATPase epsilon chain family. F-type ATPases have 2 components, CF(1) - the catalytic core - and CF(0) - the membrane proton channel. CF(1) has five subunits: alpha(3), beta(3), gamma(1), delta(1), epsilon(1). CF(0) has three main subunits: a, b and c.

Its subcellular location is the plastid. The protein resides in the chloroplast thylakoid membrane. In terms of biological role, produces ATP from ADP in the presence of a proton gradient across the membrane. The chain is ATP synthase epsilon chain, chloroplastic from Oltmannsiellopsis viridis (Marine flagellate).